Consider the following 265-residue polypeptide: Expansin-like A1 (265 aa).

Positions 1 to 20 (MGSFLFLIVVIFLFSSSVNA) are cleaved as a signal peptide. An Expansin-like EG45 domain is found at 41–147 (SGACAYGSMA…QRVPCDYGNK (107 aa)). Residues 42 to 62 (GACAYGSMATSFFAGHIAAAI) traverse the membrane as a helical segment. N-linked (GlcNAc...) asparagine glycans are attached at residues Asn99 and Asn102. The 84-residue stretch at 161–244 (NYLEIKLLYQ…NWEAGKIYDA (84 aa)) folds into the Expansin-like CBD domain.

Belongs to the expansin family. Expansin-like A subfamily.

Its subcellular location is the membrane. This is Expansin-like A1 (EXLA1) from Arabidopsis thaliana (Mouse-ear cress).